Consider the following 88-residue polypeptide: Small ribosomal subunit protein bS20 (88 aa).

The span at 1 to 12 shows a compositional bias: basic residues; that stretch reads MANHKSALKRAK. Positions 1 to 23 are disordered; that stretch reads MANHKSALKRAKQNTIKQMRNRS.

Belongs to the bacterial ribosomal protein bS20 family.

Functionally, binds directly to 16S ribosomal RNA. This chain is Small ribosomal subunit protein bS20, found in Desulfatibacillum aliphaticivorans.